The sequence spans 157 residues: Acetyltransferase PseH (157 aa).

An N-acetyltransferase domain is found at 5-152 (KNFTELNSQE…YHICLKQSDC (148 aa)).

Catalyzes the third step in the biosynthesis of pseudaminic acid, a sialic-acid-like sugar that is used to modify flagellin. Mediates N-4 acetylation of UDP-4-amino-4,6-dideoxy-beta-L-AltNAc to form UDP-2,4-diacetamido-2,4,6-trideoxy-beta-L-altropyranose. In Campylobacter jejuni subsp. jejuni serotype O:23/36 (strain 81-176), this protein is Acetyltransferase PseH (pseH).